The following is a 135-amino-acid chain: uncharacterized protein (135 aa).

This is an uncharacterized protein from Magallana gigas (Pacific oyster).